The sequence spans 463 residues: Annexin A7 (463 aa).

2 stretches are compositionally biased toward pro residues: residues 1-18 and 26-38; these read MSYP…PGYP and FPPP…PSGF. Disordered regions lie at residues 1-54 and 71-153; these read MSYP…SSGY and GYPG…THGT. Residues 1-140 form a repeat-rich region region; the sequence is MSYPGYPPTG…QYPGGQSPYP (140 aa). The segment at 5 to 20 is 3 X 5 AA tandem repeats of G-Y-P-P-X; sequence GYPPTGYPPFPGYPPT. Residues 86–99 are compositionally biased toward gly residues; the sequence is GGQGFGAPPGGAGF. Annexin repeat units follow at residues 160-231, 232-303, 315-387, and 391-462; these read FDAM…ALFM, PSTY…SMCQ, QLAQ…TILQ, and NRPA…AIVG. N6-acetyllysine is present on lysine 208.

The protein belongs to the annexin family. In terms of assembly, interacts with PDCD6.

Its function is as follows. Calcium/phospholipid-binding protein which promotes membrane fusion and is involved in exocytosis. The sequence is that of Annexin A7 (ANXA7) from Bos taurus (Bovine).